We begin with the raw amino-acid sequence, 458 residues long: MHDKTWSGRFNEPVSELVKQYTASIGFDRRLAEWDIQGSLAHAQMLKETGVLDEGDLADIRRGMAEILEEIRSGKIEWSSDLEDVHMNIERRLTDKIGDAGKRLHTGRSRNDQVATDIRLWLRDQITVIRSLIQSLQTALLDLAEQNAETVMPGFTHLQVAQPVSFGHHMLAYVEMLGRDNERMADCRCRVNRMPLGAAALAGTTYPIQREITAELLGFEQICQNSLDAVSDRDFAIEFTAAASLVMVHLSRLSEELILWMSPRFGFIDIADRFCTGSSIMPQKKNPDVPELVRGKSGRVIGHLIGLITLMKSQPLAYNKDNQEDKEPLFDTADTLIDTLRIYADMMRGVTVKPDNMRAAVMQGFATATDLADYLVKKGMPFRDAHEVVAQAVRHADEAGVDLSELPLEVLQGFSDLIADDVYGVLTPEGSLNARNHLGGTAPEQVRFQVKRWREMLA.

It belongs to the lyase 1 family. Argininosuccinate lyase subfamily.

It is found in the cytoplasm. It catalyses the reaction 2-(N(omega)-L-arginino)succinate = fumarate + L-arginine. It functions in the pathway amino-acid biosynthesis; L-arginine biosynthesis; L-arginine from L-ornithine and carbamoyl phosphate: step 3/3. The sequence is that of Argininosuccinate lyase from Neisseria meningitidis serogroup C / serotype 2a (strain ATCC 700532 / DSM 15464 / FAM18).